A 166-amino-acid chain; its full sequence is Protein C (166 aa).

The disordered stretch occupies residues 17-42; the sequence is YKRHTDDQASNNQVPKTGQEHGRTSC.

May counteract the cellular interferon antiviral system. This chain is Protein C (P/V/C), found in Hendra virus (isolate Horse/Autralia/Hendra/1994).